A 1176-amino-acid chain; its full sequence is Pesticidal crystal protein Cry1Ag (1176 aa).

The protein belongs to the delta endotoxin family.

Its function is as follows. Promotes colloidosmotic lysis by binding to the midgut epithelial cells of many lepidopteran larvae. The sequence is that of Pesticidal crystal protein Cry1Ag (cry1Ag) from Bacillus thuringiensis.